A 344-amino-acid polypeptide reads, in one-letter code: Selenide, water dikinase (344 aa).

U16 is an active-site residue. U16 is a non-standard amino acid (selenocysteine). ATP is bound by residues K19 and 46–48 (TND). Mg(2+) is bound at residue D49. Residues D66, D89, and 135–137 (GHT) contribute to the ATP site. D89 is a Mg(2+) binding site. Residue D223 participates in Mg(2+) binding.

Belongs to the selenophosphate synthase 1 family. Class I subfamily. In terms of assembly, homodimer. It depends on Mg(2+) as a cofactor.

It catalyses the reaction hydrogenselenide + ATP + H2O = selenophosphate + AMP + phosphate + 2 H(+). In terms of biological role, synthesizes selenophosphate from selenide and ATP. In Caldanaerobacter subterraneus subsp. tengcongensis (strain DSM 15242 / JCM 11007 / NBRC 100824 / MB4) (Thermoanaerobacter tengcongensis), this protein is Selenide, water dikinase.